We begin with the raw amino-acid sequence, 292 residues long: MSKGKLIKGIAGFYYVEVNKEVYECKGRGILRKKKLTPLVGDYVEITVTDEDNKKGMIDDIFPRKTELIRPTVANVDQVIVVFSVTQPDPHLSLLDHFLILAETQNIDVVICLNKLDLVQREDVAELVGIYEKVGYPVILTSQNDSIGLEQLEKVLRGKTTVFAGPSGVGKSTLLNRILPHVTLQTGELSSKIARGKHTTRHVELISLETEGWVVDTPGFSSLNIDFLKEEELADYFIDFEPFAKDCRFLSCVHLNEPICGVKTALKAGQLVQSRYNSYLQMIGEIKKNRRY.

One can recognise a CP-type G domain in the interval 65–223 (KTELIRPTVA…VVDTPGFSSL (159 aa)). Residues 114 to 117 (NKLD) and 165 to 173 (GPSGVGKST) each bind GTP. Residues C247, C252, H254, and C260 each coordinate Zn(2+).

Belongs to the TRAFAC class YlqF/YawG GTPase family. RsgA subfamily. As to quaternary structure, monomer. Associates with 30S ribosomal subunit, binds 16S rRNA. It depends on Zn(2+) as a cofactor.

It localises to the cytoplasm. One of several proteins that assist in the late maturation steps of the functional core of the 30S ribosomal subunit. Helps release RbfA from mature subunits. May play a role in the assembly of ribosomal proteins into the subunit. Circularly permuted GTPase that catalyzes slow GTP hydrolysis, GTPase activity is stimulated by the 30S ribosomal subunit. The sequence is that of Small ribosomal subunit biogenesis GTPase RsgA from Alkaliphilus metalliredigens (strain QYMF).